The following is a 1413-amino-acid chain: MKDLLKFLKAQTKNEDFDAIKISLASPDMIRSWSFGEVKKPETINYRTFKPERDGLFCARIFGPVKDYECLCGKYKRLKHRGVICEKCGVEVTQSKVRRERMGHIELSSPTAHIWFLKSLPSRIGLLLDMPLRDIERVLYFESYVVIETGMTNLEKRQILTEEQYLDALEEFGDEFYATMGAEAIQSLLKDINLVKECENLRIELNETNSETKRKKLTKRIKLLESFIQSNNKPEWMILTVLPVLPPDLRPLVPLDGGRFATSDLNDLYRRVINRNNRLKRLLDLAAPDIIVRNEKRMLQEAIDALLDNGRRGRAITGSNKRPLKSLADMIKGKQGRFRQNLLGKRVDYSGRSVITVGPYLRLHQCGLPKKMALELFKPFIYGKLEVRGLATTIKAAKKMVEREEAIVWDILDEVIREHPVLLNRAPTLHRLGIQAFEPVLIEGKAIQLHPLVCAAYNADFDGDQMAVHVPLTLEAQLEARALMMSTNNILSPANGEPIIVPSQDVVLGLYYMTREKINGKGEGMILNGSNEAEKVYRLEIAELHSLVKVRITEYKKNKDQSFIPKTKIINTTIGRAILWMIVPKGLPFSIVNQTLGKKDISKMLNTCYRILGLKPTVAFADQIMYTGFAYAARSGASVGIDDMVIPVKKLNIIHEAEIEVAEIQEQFQSGLVTAGERYNKVIDIWAAANERVAKAMMENLSTESVFNKKGEKQKQISFNSIFMMADSGARGSAAQIRQLAGMRGLMAKPDGSIIETPITANFREGLNVLQYFISTHGARKGLADTALKTANSGYLTRRLVDVAQDLVVTQNDCGTHEGILMTPLIEGGDVKEPLRERVLGRVTAEKILIPNTENILIERNTLLNEQWCDLLEKNSIDNVKVRSVVNCETDFGVCAYCYGRDLARGNLVNKGEAIGVIAAQSIGEPGTQLTMRTFHIGGAASRAATESSIQIKNKGIINLNNAKSVTNSSGKIVITSRNVELNIIDNFRRTKETYKVPYGAIMAKGHGEQVNSGETVAKWDPHTIPVITEVSGFVRFVDMIDGQSITRQADELTGLSSIVVLDTAERMTIGKDLRPSLKIVDRDGNDVLISGTEMPAQYFLPGKAIVQLDDRVQISSGDTLARVPQESGGTKDITGGLPRVADLFEARRPKELAILAEISGIISFGKETKGKRRLIITPVDGSDAYEEMIPKWRQLNVFEGERVERGDVISDGPESPHDILRLRGVQAVTKYIVNEVQEVYRLQGVKINDKHIEVIIRQMLRKATVIKSGNSEFLDGEQVEFSRIKISNRILNKQSKIPATFSRDLLGITKASLATESFISAASFQETTRVLTESAVAGKKDELRGLKENVIVGRLIPAGTGYAYHKERLNRRHTVNTNQIKPNNSSSQISAEEASASLSELLNSTLIQHDHT.

Residues C70, C72, C85, and C88 each contribute to the Zn(2+) site. D460, D462, and D464 together coordinate Mg(2+). Residues C814, C888, C895, and C898 each coordinate Zn(2+).

The protein belongs to the RNA polymerase beta' chain family. As to quaternary structure, the RNAP catalytic core consists of 2 alpha, 1 beta, 1 beta' and 1 omega subunit. When a sigma factor is associated with the core the holoenzyme is formed, which can initiate transcription. Mg(2+) is required as a cofactor. Requires Zn(2+) as cofactor.

The catalysed reaction is RNA(n) + a ribonucleoside 5'-triphosphate = RNA(n+1) + diphosphate. Functionally, DNA-dependent RNA polymerase catalyzes the transcription of DNA into RNA using the four ribonucleoside triphosphates as substrates. The chain is DNA-directed RNA polymerase subunit beta' from Buchnera aphidicola subsp. Schizaphis graminum (strain Sg).